The following is an 84-amino-acid chain: U21-theraphotoxin-Cg1c (84 aa).

Positions 1–21 (MKVSVLITLAVLGVMFLLTSA) are cleaved as a signal peptide. A propeptide spanning residues 22-47 (EERGSDQMDSPAWLKSMERIFQSEER) is cleaved from the precursor. Disulfide bonds link C49/C63, C56/C68, and C62/C76.

It belongs to the neurotoxin 10 (Hwtx-1) family. 05 (F4a) subfamily. As to expression, expressed by the venom gland.

The protein resides in the secreted. Functionally, probable ion channel inhibitor. In Chilobrachys guangxiensis (Chinese earth tiger tarantula), this protein is U21-theraphotoxin-Cg1c.